Reading from the N-terminus, the 217-residue chain is Thymidylate kinase (217 aa).

16-23 contributes to the ATP binding site; the sequence is GIDGAGKT.

It belongs to the thymidylate kinase family.

It carries out the reaction dTMP + ATP = dTDP + ADP. Its function is as follows. Phosphorylation of dTMP to form dTDP in both de novo and salvage pathways of dTTP synthesis. The chain is Thymidylate kinase from Xylella fastidiosa (strain M12).